Consider the following 201-residue polypeptide: Peptidyl-prolyl cis-trans isomerase FKBP11 (201 aa).

Residues 1 to 27 (MTLRPSLLPLHLLLLLLLSAAVCRAEA) form the signal peptide. The PPIase FKBP-type domain maps to 57 to 144 (GDTLHIHYTG…QYDVELIALI (88 aa)). Residues 156-176 (ILPLVGMAMVPALLGLIGYHL) traverse the membrane as a helical segment.

It belongs to the FKBP-type PPIase family. Interacts with IFITM5.

The protein localises to the membrane. The enzyme catalyses [protein]-peptidylproline (omega=180) = [protein]-peptidylproline (omega=0). In terms of biological role, PPIases accelerate the folding of proteins during protein synthesis. The sequence is that of Peptidyl-prolyl cis-trans isomerase FKBP11 (FKBP11) from Homo sapiens (Human).